Reading from the N-terminus, the 98-residue chain is UPF0251 protein Sbal_3699 (98 aa).

This sequence belongs to the UPF0251 family.

This Shewanella baltica (strain OS155 / ATCC BAA-1091) protein is UPF0251 protein Sbal_3699.